Here is a 145-residue protein sequence, read N- to C-terminus: D-aminoacyl-tRNA deacylase (145 aa).

Residues 137–138 carry the Gly-cisPro motif, important for rejection of L-amino acids motif; the sequence is GP.

It belongs to the DTD family. Homodimer.

The protein resides in the cytoplasm. It catalyses the reaction glycyl-tRNA(Ala) + H2O = tRNA(Ala) + glycine + H(+). It carries out the reaction a D-aminoacyl-tRNA + H2O = a tRNA + a D-alpha-amino acid + H(+). Its function is as follows. An aminoacyl-tRNA editing enzyme that deacylates mischarged D-aminoacyl-tRNAs. Also deacylates mischarged glycyl-tRNA(Ala), protecting cells against glycine mischarging by AlaRS. Acts via tRNA-based rather than protein-based catalysis; rejects L-amino acids rather than detecting D-amino acids in the active site. By recycling D-aminoacyl-tRNA to D-amino acids and free tRNA molecules, this enzyme counteracts the toxicity associated with the formation of D-aminoacyl-tRNA entities in vivo and helps enforce protein L-homochirality. The polypeptide is D-aminoacyl-tRNA deacylase (Shewanella sp. (strain MR-4)).